The following is a 433-amino-acid chain: MRKPFYKILYVQVLFAICIGILLGHFWPDTGVAMKPLGDGFIKLIKMIIGPIIFCTVVTGIAGMSDMKKVGRVGGKALLYFEVVSTFALLIGLGAAHLLKPGVGFNIDPATLDTKAIAQYVSKAHGQSTVEFLMHIIPDTVFSAFANGDILQILLVSLFFGAALAVLGERARIVVQLIEQVSKVFFHIVHVITKVAPIGAFGAMAFTIGKYGLGSLVPLLKLIGTFYFTAIVFVLVVLGTIARMTGFSIVRFIAYIKEELLIVLGTSSSEAALPHMMEKLEKLGCSKSVVGLVVPTGYSFNLDGTNIYMTMAVIFIAQATGIELTLMQQLTILAVAMITSKGASGVTGSGFITLAATLAVVPTIPVAGMVLILGIDRFMSECRALTNIIGNGVATVVVSAWERELDRKRLARVLQHGAGDDADTLGEAGQRAA.

The next 8 membrane-spanning stretches (helical) occupy residues 8-28 (ILYVQVLFAICIGILLGHFWP), 44-64 (LIKMIIGPIIFCTVVTGIAGM), 78-98 (LLYFEVVSTFALLIGLGAAHL), 148-168 (GDILQILLVSLFFGAALAVLG), 188-208 (IVHVITKVAPIGAFGAMAFTI), 222-242 (LIGTFYFTAIVFVLVVLGTIA), 307-327 (IYMTMAVIFIAQATGIELTLM), and 355-375 (AATLAVVPTIPVAGMVLILGI).

The protein belongs to the dicarboxylate/amino acid:cation symporter (DAACS) (TC 2.A.23) family.

It localises to the cell inner membrane. Functionally, responsible for the transport of dicarboxylates such as succinate, fumarate, and malate from the periplasm across the membrane. This Cupriavidus taiwanensis (strain DSM 17343 / BCRC 17206 / CCUG 44338 / CIP 107171 / LMG 19424 / R1) (Ralstonia taiwanensis (strain LMG 19424)) protein is C4-dicarboxylate transport protein.